Reading from the N-terminus, the 85-residue chain is Alpha-insect toxin BjaIT (85 aa).

A signal peptide spans 1 to 19 (MNYLVVICFALLLMTGVES). One can recognise an LCN-type CS-alpha/beta domain in the interval 21 to 83 (RDAYIADNLN…VPIRIPGACR (63 aa)). 4 disulfide bridges follow: Cys-31/Cys-82, Cys-35/Cys-55, Cys-41/Cys-65, and Cys-45/Cys-67. Arg-83 carries the post-translational modification Arginine amide.

Belongs to the long (4 C-C) scorpion toxin superfamily. Sodium channel inhibitor family. Alpha subfamily. In terms of tissue distribution, expressed by the venom gland.

It localises to the secreted. Its function is as follows. Alpha toxins bind voltage-independently at site-3 of sodium channels (Nav) and inhibit the inactivation of the activated channels, thereby blocking neuronal transmission. This toxin is active against insects (para/tipE). This chain is Alpha-insect toxin BjaIT, found in Hottentotta judaicus (Black scorpion).